The chain runs to 429 residues: Formate-dependent phosphoribosylglycinamide formyltransferase (429 aa).

Residues 26-27 and E86 each bind N(1)-(5-phospho-beta-D-ribosyl)glycinamide; that span reads EL. ATP is bound by residues R118, K159, 199 to 202, and E207; that span reads EEHI. An ATP-grasp domain is found at 123 to 319; it reads ETLAREAKVP…EFGLHLRAVL (197 aa). Mg(2+) contacts are provided by E276 and E288. Residues D295, K375, and 382-383 each bind N(1)-(5-phospho-beta-D-ribosyl)glycinamide; that span reads RR.

Belongs to the PurK/PurT family. As to quaternary structure, homodimer.

The enzyme catalyses N(1)-(5-phospho-beta-D-ribosyl)glycinamide + formate + ATP = N(2)-formyl-N(1)-(5-phospho-beta-D-ribosyl)glycinamide + ADP + phosphate + H(+). Its pathway is purine metabolism; IMP biosynthesis via de novo pathway; N(2)-formyl-N(1)-(5-phospho-D-ribosyl)glycinamide from N(1)-(5-phospho-D-ribosyl)glycinamide (formate route): step 1/1. In terms of biological role, involved in the de novo purine biosynthesis. Catalyzes the transfer of formate to 5-phospho-ribosyl-glycinamide (GAR), producing 5-phospho-ribosyl-N-formylglycinamide (FGAR). Formate is provided by PurU via hydrolysis of 10-formyl-tetrahydrofolate. In Thermococcus kodakarensis (strain ATCC BAA-918 / JCM 12380 / KOD1) (Pyrococcus kodakaraensis (strain KOD1)), this protein is Formate-dependent phosphoribosylglycinamide formyltransferase.